The primary structure comprises 293 residues: Movement protein BC1 (293 aa).

The protein belongs to the begomovirus movement protein BC1 family. As to quaternary structure, binds to dimeric supercoiled plasmid DNA. Post-translationally, phosphorylated.

The protein resides in the host cell membrane. The protein localises to the host microsome membrane. It is found in the host endoplasmic reticulum membrane. Its function is as follows. Transports viral genome to neighboring plant cells directly through plasmosdesmata, without any budding. The movement protein allows efficient cell to cell propagation, by bypassing the host cell wall barrier. Begomovirus genome is shuttled out of nucleus by Nuclear shuttle protein (NSP) and the movement protein transports the DNA-NSP complex to cell plasmodesmata and facilitates further movement across the cell wall. This chain is Movement protein BC1, found in Macroptilium lathyroides (Lima bean).